The chain runs to 189 residues: UPF0301 protein PputW619_0469 (189 aa).

This sequence belongs to the UPF0301 (AlgH) family.

The sequence is that of UPF0301 protein PputW619_0469 from Pseudomonas putida (strain W619).